Here is a 182-residue protein sequence, read N- to C-terminus: Prorelaxin (182 aa).

A signal peptide spans 1–25 (MRRLFLSHVLGAWLLLSQLPRELSG). The residue at position 26 (Gln-26) is a Pyrrolidone carboxylic acid. Disulfide bonds link Cys-35-Cys-169, Cys-47-Cys-182, and Cys-168-Cys-173. The propeptide at 54–156 (KTVLRLEEPG…LKNLGLDKHS (103 aa)) is connecting peptide. Positions 161-162 (MI) are excised as a propeptide. Gln-163 is modified (pyrrolidone carboxylic acid).

It belongs to the insulin family. As to quaternary structure, heterodimer of a B chain and an A chain linked by two disulfide bonds.

Its subcellular location is the secreted. Functionally, relaxin is an ovarian hormone that acts with estrogen to produce dilatation of the birth canal in many mammals. The chain is Prorelaxin (RLN) from Equus caballus (Horse).